The primary structure comprises 354 residues: MKFVDEVKIHVKAGDGGDGAVAWRREKFIPRGGPAGGDGGNGGDVVLEVDPQLSTLLDYRYIREHKARNGEKGSGSDMNGKDGADLVLRVPPGTVVKDAATGEQLCDLGTAGERVVIAKGGRGGLGNMNFASSTNQAPRYAEDGTPGAERDLVLELKLLADVGIVGYPNAGKSTLISRISRARPKIADYPFTTLTPNLGVVGWRERSFVVADIPGLIEGAHAGAGLGHQFLRHVERCRVLIHLVEGANPEPGRAPKADLDAINAELAAYSDELAKKPQIVAVTKIDVPEARAAGVKLQKLLGRRKKPVPVHLVSAVTGEGLDALLDAVGRALFKEARPHRGGGGKKLAKPRARA.

The Obg domain occupies 1 to 159; the sequence is MKFVDEVKIH…RDLVLELKLL (159 aa). Residues 160 to 333 form the OBG-type G domain; the sequence is ADVGIVGYPN…LLDAVGRALF (174 aa). GTP contacts are provided by residues 166–173, 191–195, 212–215, 283–286, and 314–316; these read GYPNAGKS, FTTLT, DIPG, TKID, and SAV. The Mg(2+) site is built by Ser-173 and Thr-193.

The protein belongs to the TRAFAC class OBG-HflX-like GTPase superfamily. OBG GTPase family. As to quaternary structure, monomer. Mg(2+) serves as cofactor.

Its subcellular location is the cytoplasm. An essential GTPase which binds GTP, GDP and possibly (p)ppGpp with moderate affinity, with high nucleotide exchange rates and a fairly low GTP hydrolysis rate. Plays a role in control of the cell cycle, stress response, ribosome biogenesis and in those bacteria that undergo differentiation, in morphogenesis control. The polypeptide is GTPase Obg (Anaeromyxobacter dehalogenans (strain 2CP-C)).